A 135-amino-acid polypeptide reads, in one-letter code: Small ribosomal subunit protein uS11 (135 aa).

Residues 1-10 show a composition bias toward polar residues; it reads MPPKSRTATA. 2 disordered regions span residues 1-27 and 114-135; these read MPPKSRTATASRKPRRKEKKNVAHGHA and GAIQDVTPSPHNGCRPPKRRRV. A compositionally biased stretch (basic residues) spans 12 to 27; the sequence is RKPRRKEKKNVAHGHA.

Belongs to the universal ribosomal protein uS11 family. As to quaternary structure, part of the 30S ribosomal subunit. Interacts with proteins S7 and S18. Binds to IF-3.

In terms of biological role, located on the platform of the 30S subunit, it bridges several disparate RNA helices of the 16S rRNA. Forms part of the Shine-Dalgarno cleft in the 70S ribosome. This is Small ribosomal subunit protein uS11 from Kineococcus radiotolerans (strain ATCC BAA-149 / DSM 14245 / SRS30216).